Consider the following 311-residue polypeptide: Cell division protein ZipA (311 aa).

At 1–5 (MQELR) the chain is on the periplasmic side. A helical transmembrane segment spans residues 6–26 (FVLIVVGALAIMALLFHGLWT). Residues 27–311 (SKKEGKAKFG…QIVEFKAANA (285 aa)) lie on the Cytoplasmic side of the membrane. The span at 32-54 (KAKFGDKPLSKLDLGESEPKESE) shows a compositional bias: basic and acidic residues. Residues 32-60 (KAKFGDKPLSKLDLGESEPKESEMYVAPE) are disordered.

It belongs to the ZipA family. As to quaternary structure, interacts with FtsZ via their C-terminal domains.

It is found in the cell inner membrane. Essential cell division protein that stabilizes the FtsZ protofilaments by cross-linking them and that serves as a cytoplasmic membrane anchor for the Z ring. Also required for the recruitment to the septal ring of downstream cell division proteins. This Vibrio vulnificus (strain YJ016) protein is Cell division protein ZipA.